Consider the following 201-residue polypeptide: ATP-dependent Clp protease proteolytic subunit 2 (201 aa).

The Nucleophile role is filled by Ser100. Residue His125 is part of the active site.

The protein belongs to the peptidase S14 family. As to quaternary structure, fourteen ClpP subunits assemble into 2 heptameric rings which stack back to back to give a disk-like structure with a central cavity, resembling the structure of eukaryotic proteasomes.

It localises to the cytoplasm. It catalyses the reaction Hydrolysis of proteins to small peptides in the presence of ATP and magnesium. alpha-casein is the usual test substrate. In the absence of ATP, only oligopeptides shorter than five residues are hydrolyzed (such as succinyl-Leu-Tyr-|-NHMec, and Leu-Tyr-Leu-|-Tyr-Trp, in which cleavage of the -Tyr-|-Leu- and -Tyr-|-Trp bonds also occurs).. In terms of biological role, cleaves peptides in various proteins in a process that requires ATP hydrolysis. Has a chymotrypsin-like activity. Plays a major role in the degradation of misfolded proteins. In Corynebacterium glutamicum (strain ATCC 13032 / DSM 20300 / JCM 1318 / BCRC 11384 / CCUG 27702 / LMG 3730 / NBRC 12168 / NCIMB 10025 / NRRL B-2784 / 534), this protein is ATP-dependent Clp protease proteolytic subunit 2.